Reading from the N-terminus, the 942-residue chain is Envelope glycoprotein (942 aa).

Positions 1–80 (MDAGASYMRL…LLWTNMCVRA (80 aa)) are cleaved as a signal peptide. Residues asparagine 51, asparagine 98, asparagine 131, asparagine 176, asparagine 228, asparagine 331, asparagine 348, asparagine 354, asparagine 370, asparagine 379, asparagine 400, asparagine 404, asparagine 435, asparagine 441, asparagine 447, asparagine 457, asparagine 467, asparagine 481, asparagine 493, asparagine 503, asparagine 509, asparagine 527, and asparagine 534 are each glycosylated (N-linked (GlcNAc...) asparagine; by host). At 81–799 (EDYITLISDP…SLKEVFDWSG (719 aa)) the chain is on the extracellular side. Positions 631 to 651 (GVGLVIMLVIMAIVAAAGASL) are fusion peptide. 2 coiled-coil regions span residues 663–713 (KAAV…RIML) and 754–789 (RELQ…DVWE). Residues 697 to 713 (LEARVARVEAITDRIML) are immunosuppression. Residues 800 to 820 (WFSWLKYIPIIVVGLVGCILI) form a helical membrane-spanning segment. Residues 821 to 942 (RAVICVCQPL…VDCETWGKGD (122 aa)) are Cytoplasmic-facing.

In terms of assembly, the mature envelope protein (Env) consists of a trimer of SU-TM heterodimers attached by noncovalent interactions or by a labile interchain disulfide bond. In terms of processing, specific enzymatic cleavages in vivo yield mature proteins. Envelope glycoproteins are synthesized as an inactive precursor that is N-glycosylated and processed likely by host cell furin or by a furin-like protease in the Golgi to yield the mature SU and TM proteins. The cleavage site between SU and TM requires the minimal sequence [KR]-X-[KR]-R.

The protein resides in the virion membrane. It is found in the host cell membrane. The surface protein (SU) attaches the virus to the host cell by binding to its receptor. This interaction triggers the refolding of the transmembrane protein (TM) and is thought to activate its fusogenic potential by unmasking its fusion peptide. Fusion occurs at the host cell plasma membrane. Its function is as follows. The transmembrane protein (TM) acts as a class I viral fusion protein. Under the current model, the protein has at least 3 conformational states: pre-fusion native state, pre-hairpin intermediate state, and post-fusion hairpin state. During viral and target cell membrane fusion, the coiled coil regions (heptad repeats) assume a trimer-of-hairpins structure, positioning the fusion peptide in close proximity to the C-terminal region of the ectodomain. The formation of this structure appears to drive apposition and subsequent fusion of viral and target cell membranes. Membranes fusion leads to delivery of the nucleocapsid into the cytoplasm. The polypeptide is Envelope glycoprotein (env) (Caprine arthritis encephalitis virus (strain 63) (CAEV-63)).